Here is a 149-residue protein sequence, read N- to C-terminus: Nucleoside diphosphate kinase (149 aa).

Positions 9, 57, 85, 91, 102, and 112 each coordinate ATP. Histidine 115 acts as the Pros-phosphohistidine intermediate in catalysis.

The protein belongs to the NDK family. Homotetramer. Mg(2+) serves as cofactor.

It localises to the cytoplasm. The catalysed reaction is a 2'-deoxyribonucleoside 5'-diphosphate + ATP = a 2'-deoxyribonucleoside 5'-triphosphate + ADP. The enzyme catalyses a ribonucleoside 5'-diphosphate + ATP = a ribonucleoside 5'-triphosphate + ADP. Functionally, major role in the synthesis of nucleoside triphosphates other than ATP. The ATP gamma phosphate is transferred to the NDP beta phosphate via a ping-pong mechanism, using a phosphorylated active-site intermediate. The polypeptide is Nucleoside diphosphate kinase (Synechocystis sp. (strain ATCC 27184 / PCC 6803 / Kazusa)).